We begin with the raw amino-acid sequence, 132 residues long: Transcription antitermination protein NusB (132 aa).

It belongs to the NusB family.

Involved in transcription antitermination. Required for transcription of ribosomal RNA (rRNA) genes. Binds specifically to the boxA antiterminator sequence of the ribosomal RNA (rrn) operons. The protein is Transcription antitermination protein NusB of Lachnoclostridium phytofermentans (strain ATCC 700394 / DSM 18823 / ISDg) (Clostridium phytofermentans).